The chain runs to 262 residues: 14-3-3 protein I (262 aa).

The protein belongs to the 14-3-3 family. As to quaternary structure, homodimer. Forms a complex composed of CDPK1, PKA regulatory subunit PKAr and 14-3-3I; the complex is formed in merozoites in response to low extracellular level of K(+) and may play a role in microneme secretion. Interacts with CDPK1 (when phosphorylated) in a Ca(2+)-independent manner; the interaction does not regulate CDPK1 catalytic activity but is required for merozoite invasion of host erythrocytes. Interacts with PKA regulatory subunit PKAr (when phosphorylated) in a Ca(2+)-dependent manner. Interacts with histone H3 (when phosphorylated at 'Ser-28' or when phosphorylated at 'Ser-28' and 'Ser-32').

It is found in the cell membrane. It localises to the cytoplasm. The protein localises to the nucleus. Functionally, adapter protein which binds to its partners, usually via a phosphoserine or phosphothreonine motif. Binding generally results in the modulation of the activity and/or cellular localization of the binding partner. Via its interaction with CDPK1 and PKAr, involved in merozoite microneme secretion and thus in merozoite invasion of host erythrocytes. This is 14-3-3 protein I from Plasmodium falciparum (isolate 3D7).